We begin with the raw amino-acid sequence, 556 residues long: 2,3-bisphosphoglycerate-independent phosphoglycerate mutase (556 aa).

The Mn(2+) site is built by Asp25 and Ser78. Ser78 acts as the Phosphoserine intermediate in catalysis. Substrate contacts are provided by residues His137, 167–168 (RD), Arg203, Arg210, 283–286 (RADR), and Lys358. Mn(2+) contacts are provided by Asp427, His431, Asp468, His469, and His498.

It belongs to the BPG-independent phosphoglycerate mutase family. In terms of assembly, monomer. It depends on Mn(2+) as a cofactor. In terms of tissue distribution, found ubiquitously in germinating seed.

The protein localises to the cytoplasm. It carries out the reaction (2R)-2-phosphoglycerate = (2R)-3-phosphoglycerate. It functions in the pathway carbohydrate degradation; glycolysis; pyruvate from D-glyceraldehyde 3-phosphate: step 3/5. In terms of biological role, catalyzes the interconversion of 2-phosphoglycerate and 3-phosphoglycerate. The polypeptide is 2,3-bisphosphoglycerate-independent phosphoglycerate mutase (Ricinus communis (Castor bean)).